We begin with the raw amino-acid sequence, 310 residues long: Protein-methionine-sulfoxide reductase catalytic subunit MsrP (310 aa).

The segment at residues 1-45 (MRKTSSPRIAPSEITPRDLYHDRRRFMQAAAGAAAAALWPHWLSA) is a signal peptide (tat-type signal). Residues Asn-73, 76-77 (YE), Cys-131, Thr-166, Asn-214, Arg-219, and 230-232 (SAK) each bind Mo-molybdopterin.

This sequence belongs to the MsrP family. Heterodimer of a catalytic subunit (MsrP) and a heme-binding subunit (MsrQ). Mo-molybdopterin is required as a cofactor. In terms of processing, predicted to be exported by the Tat system. The position of the signal peptide cleavage has not been experimentally proven.

The protein localises to the periplasm. It carries out the reaction L-methionyl-[protein] + a quinone + H2O = L-methionyl-(S)-S-oxide-[protein] + a quinol. The catalysed reaction is L-methionyl-[protein] + a quinone + H2O = L-methionyl-(R)-S-oxide-[protein] + a quinol. Part of the MsrPQ system that repairs oxidized periplasmic proteins containing methionine sulfoxide residues (Met-O), using respiratory chain electrons. Thus protects these proteins from oxidative-stress damage caused by reactive species of oxygen and chlorine generated by the host defense mechanisms. MsrPQ is essential for the maintenance of envelope integrity under bleach stress, rescuing a wide series of structurally unrelated periplasmic proteins from methionine oxidation. The catalytic subunit MsrP is non-stereospecific, being able to reduce both (R-) and (S-) diastereoisomers of methionine sulfoxide. The polypeptide is Protein-methionine-sulfoxide reductase catalytic subunit MsrP (Methylococcus capsulatus (strain ATCC 33009 / NCIMB 11132 / Bath)).